The chain runs to 321 residues: Acetyl-coenzyme A carboxylase carboxyl transferase subunit alpha (321 aa).

Residues Arg-39–Gln-293 form the CoA carboxyltransferase C-terminal domain.

Belongs to the AccA family. As to quaternary structure, acetyl-CoA carboxylase is a heterohexamer composed of biotin carboxyl carrier protein (AccB), biotin carboxylase (AccC) and two subunits each of ACCase subunit alpha (AccA) and ACCase subunit beta (AccD).

The protein resides in the cytoplasm. It catalyses the reaction N(6)-carboxybiotinyl-L-lysyl-[protein] + acetyl-CoA = N(6)-biotinyl-L-lysyl-[protein] + malonyl-CoA. It participates in lipid metabolism; malonyl-CoA biosynthesis; malonyl-CoA from acetyl-CoA: step 1/1. Functionally, component of the acetyl coenzyme A carboxylase (ACC) complex. First, biotin carboxylase catalyzes the carboxylation of biotin on its carrier protein (BCCP) and then the CO(2) group is transferred by the carboxyltransferase to acetyl-CoA to form malonyl-CoA. The polypeptide is Acetyl-coenzyme A carboxylase carboxyl transferase subunit alpha (Bordetella bronchiseptica (strain ATCC BAA-588 / NCTC 13252 / RB50) (Alcaligenes bronchisepticus)).